We begin with the raw amino-acid sequence, 220 residues long: Nucleolar protein 12 (220 aa).

A coiled-coil region spans residues 31 to 86 (HKRKMQRRKTAVEEIKRKIKEEQKKMKEERHKEYMKMLKEREEALCELEENDELEE). The tract at residues 109–220 (ISDLDLSGIR…QTGKTRRRRN (112 aa)) is disordered. Residues 139–148 (EKGADEEKPK) are compositionally biased toward basic and acidic residues. Basic residues-rich tracts occupy residues 176–186 (RSQRKSGKRPS) and 205–220 (KTQR…RRRN).

This sequence belongs to the RRP17 family.

It is found in the nucleus. The protein localises to the nucleolus. Its function is as follows. May bind to rRNA. The chain is Nucleolar protein 12 (nol12) from Xenopus laevis (African clawed frog).